The sequence spans 128 residues: Small ribosomal subunit protein uS14m (128 aa).

This sequence belongs to the universal ribosomal protein uS14 family. Component of the mitochondrial ribosome small subunit (28S) which comprises a 12S rRNA and about 30 distinct proteins. Interacts with LIAT1.

The protein resides in the mitochondrion. This chain is Small ribosomal subunit protein uS14m (MRPS14), found in Bos taurus (Bovine).